We begin with the raw amino-acid sequence, 807 residues long: MRLSPAPLRLSRGPALLALALPLAAALAFSDETLDKVAKSEGYCSRILRAQGTRREGYTEFSLRVEGDPDFYKPGSSYRVTLSAAPPSYFRGFTLIALKENREGDKEEDHAGTFQIIDEEETQFMSNCPVAVTESTPRRRTRIQVFWIAPPTGTGCVILKASIVQKRIIYFQDEGSLTKKLCEQDPTLDGVTDRPILDCCACGTAKYRLTFYGNWSEKTHPKDYPRRANHWSAIIGGSHSKNYVLWEYGGYASEGVKQVAELGSPVKMEEEIRQQSDEVLTVIKAKAQWPSWQPVNVRAAPSAEFSVDRTRHLMSFLTMMGPSPDWNVGLSAEDLCTKECGWVQKVVQDLIPWDAGTDSGVTYESPNKPTIPQEKIRPLTSLDHPQSPFYDPEGGSITQVARVVIERIARKGEQCNIVPDNVDDIVADLAPEEKDEDDTPETCIYSNWSPWSACSSSTCEKGKRMRQRMLKAQLDLSVPCPDTQDFQPCMGPGCSDEDGSTCTMSEWITWSPCSVSCGMGMRSRERYVKQFPEDGSVCMLPTEETEKCTVNEECSPSSCLVTEWGEWDDCSATCGMGMKKRHRMVKMSPADGSMCKAETSQAEKCMMPECHTIPCLLSPWSEWSDCSVTCGKGMRTRQRMLKSLAELGDCNEDLEQAEKCMLPECPIDCELSEWSQWSECNKSCGKGHMIRTRTIQMEPQFGGAPCPETVQRKKCRARKCLRSPSIQKLRWREARESRRSEQLREESDGEQFPGCRMRPWTAWSECTKLCGGGIQERYMTVKKRFKSSQFTSCKDKKEIRACNVHPC.

Positions 1 to 28 are cleaved as a signal peptide; that stretch reads MRLSPAPLRLSRGPALLALALPLAAALA. In terms of domain architecture, Reelin spans 29–194; that stretch reads FSDETLDKVA…DPTLDGVTDR (166 aa). Intrachain disulfides connect C44–C128, C156–C182, C199–C336, C200–C340, C202–C415, C443–C480, C454–C489, C459–C494, C502–C538, C513–C517, C548–C554, C559–C595, C570–C574, C605–C610, C615–C650, C626–C630, and C660–C665. Positions 195–388 constitute a Spondin domain; the sequence is PILDCCACGT…LTSLDHPQSP (194 aa). N-linked (GlcNAc...) asparagine glycosylation is present at N214. Ca(2+)-binding residues include D325, D354, and D358. TSP type-1 domains follow at residues 442-495, 501-555, 558-611, 614-666, and 668-721; these read TCIY…PGCS, TCTM…EECS, SCLV…PECH, PCLL…PECP, and DCEL…RKCL. N681 is a glycosylation site (N-linked (GlcNAc...) asparagine). The segment covering 732–746 has biased composition (basic and acidic residues); sequence REARESRRSEQLREE. The tract at residues 732-752 is disordered; sequence REARESRRSEQLREESDGEQF. The 53-residue stretch at 754-806 folds into the TSP type-1 6 domain; sequence GCRMRPWTAWSECTKLCGGGIQERYMTVKKRFKSSQFTSCKDKKEIRACNVHP.

As to quaternary structure, binds to the central extracellular domain of APP and inhibits beta-secretase cleavage of APP. Expressed at high levels in the floor plate.

Its subcellular location is the secreted. It localises to the extracellular space. The protein resides in the extracellular matrix. Functionally, cell adhesion protein that promotes the attachment of spinal cord and sensory neuron cells and the outgrowth of neurites in vitro. May contribute to the growth and guidance of axons in both the spinal cord and the PNS. This Rattus norvegicus (Rat) protein is Spondin-1 (Spon1).